The chain runs to 262 residues: Putative phosphatase HI_0003 (262 aa).

D9 functions as the Nucleophile in the catalytic mechanism. Residues D9 and N11 each coordinate Mg(2+). Residues 43 to 44 (SA) and K189 each bind phosphate. Residue D212 participates in Mg(2+) binding. N215 provides a ligand contact to phosphate.

It belongs to the HAD-like hydrolase superfamily. Cof family. It depends on Mg(2+) as a cofactor.

The sequence is that of Putative phosphatase HI_0003 from Haemophilus influenzae (strain ATCC 51907 / DSM 11121 / KW20 / Rd).